The chain runs to 234 residues: DNA repair protein RecO (234 aa).

Belongs to the RecO family.

Functionally, involved in DNA repair and RecF pathway recombination. The polypeptide is DNA repair protein RecO (Alteromonas mediterranea (strain DSM 17117 / CIP 110805 / LMG 28347 / Deep ecotype)).